The following is a 369-amino-acid chain: Fructose-bisphosphate aldolase (369 aa).

Asp-40 provides a ligand contact to dihydroxyacetone phosphate. D-glyceraldehyde 3-phosphate is bound by residues Ser-42 and Thr-45. Residue Arg-49 participates in beta-D-fructose 1,6-bisphosphate binding. Lys-113 lines the D-glyceraldehyde 3-phosphate pocket. Dihydroxyacetone phosphate is bound at residue Lys-152. Glu-195 serves as a coordination point for D-glyceraldehyde 3-phosphate. Glu-195 functions as the Proton acceptor in the catalytic mechanism. Positions 237, 279, and 280 each coordinate dihydroxyacetone phosphate. The active-site Schiff-base intermediate with dihydroxyacetone phosphate is the Lys-237. Beta-D-fructose 1,6-bisphosphate-binding positions include 279 to 281 (SGG) and Ser-307. Gly-309 and Arg-310 together coordinate dihydroxyacetone phosphate. A beta-D-fructose 1,6-bisphosphate-binding site is contributed by Arg-310.

The protein belongs to the class I fructose-bisphosphate aldolase family. In terms of assembly, homotetramer. Interacts with TRAP (via cytoplasmic domain); the interaction prevents substrate binding and thereby inhibits aldolase activity. Interacts with MTRAP (via cytoplasmic domain); MTRAP phosphorylation may increase the binding to FBPA. Interact with RH1 (via cytoplasmic domain). Interacts with RH2b (via cytoplasmic domain). Interacts with RH4 (via cytoplasmic domain). Interacts with AMA1 (via cytoplasmic domain); the interaction is weak, however it may be increased upon AMA1 phosphorylation. Interacts with EBA140 (via cytoplasmic domain); the interaction is weak. Interacts with EBA175 (via cytoplasmic domain); the interaction is weak. Interacts with EBA181 (via cytoplasmic domain); the interaction is weak. Interacts with G-actin and F-actin. May interact with ACT2/actin II; the interaction inhibits FBPA catalytic activity. Interacts with human SLC4A1/band 3 (via N-terminus); the interaction inhibits FBPA catalytic activity.

The protein localises to the cytoplasm. It localises to the membrane. Its subcellular location is the host cell membrane. The enzyme catalyses beta-D-fructose 1,6-bisphosphate = D-glyceraldehyde 3-phosphate + dihydroxyacetone phosphate. The protein operates within carbohydrate degradation; glycolysis; D-glyceraldehyde 3-phosphate and glycerone phosphate from D-glucose: step 4/4. Its activity is regulated as follows. The cytoplasmic tail of TRAP and probably other adhesins acts as a competitive inhibitor as the binding sites of the glycolytic substrate fructose 1,6-bisphosphate and TRAP partially overlap. In terms of biological role, plays a key role in glycolysis by catalyzing the cleavage of fructose 1,6-bisphosphate into dihydroxyacetone phosphate and glyceraldehyde 3-phosphate. Independently of its catalytic activity, connects the actin filaments, and thus the actomyosin motor, to cell surface adhesins of the thrombospondin-related anonymous protein (TRAP), the erythrocyte binding ligand (EBL) and reticulocyte binding homolog (RH) protein families; this interaction is probably involved in transducing the motor force across the parasite surface required for sporozoite and ookinete gliding motility and merozoite invasion. Stimulates actin polymerisation. The chain is Fructose-bisphosphate aldolase from Plasmodium falciparum (isolate 3D7).